Consider the following 353-residue polypeptide: Quinolinate synthase (353 aa).

Iminosuccinate contacts are provided by H47 and S68. C113 contacts [4Fe-4S] cluster. Iminosuccinate is bound by residues 139–141 (YAN) and S156. A [4Fe-4S] cluster-binding site is contributed by C200. Iminosuccinate-binding positions include 226–228 (HPE) and T243. C297 contacts [4Fe-4S] cluster.

It belongs to the quinolinate synthase family. Type 1 subfamily. [4Fe-4S] cluster is required as a cofactor.

The protein localises to the cytoplasm. It carries out the reaction iminosuccinate + dihydroxyacetone phosphate = quinolinate + phosphate + 2 H2O + H(+). Its pathway is cofactor biosynthesis; NAD(+) biosynthesis; quinolinate from iminoaspartate: step 1/1. Functionally, catalyzes the condensation of iminoaspartate with dihydroxyacetone phosphate to form quinolinate. In Vibrio vulnificus (strain CMCP6), this protein is Quinolinate synthase.